The following is a 202-amino-acid chain: Small ribosomal subunit protein uS4 (202 aa).

Residues 15 to 43 (LGDLPGLTRKAAKRSNPPGQHGNARRKRS) form a disordered region. Residues 90–152 (GRLDNVCFRL…KGSKKLAEGN (63 aa)) form the S4 RNA-binding domain.

Belongs to the universal ribosomal protein uS4 family. Part of the 30S ribosomal subunit. Contacts protein S5. The interaction surface between S4 and S5 is involved in control of translational fidelity.

In terms of biological role, one of the primary rRNA binding proteins, it binds directly to 16S rRNA where it nucleates assembly of the body of the 30S subunit. With S5 and S12 plays an important role in translational accuracy. This Prochlorococcus marinus (strain SARG / CCMP1375 / SS120) protein is Small ribosomal subunit protein uS4.